Here is a 439-residue protein sequence, read N- to C-terminus: FK506-binding protein 59 (439 aa).

PPIase FKBP-type domains are found at residues 32 to 120 and 149 to 235; these read GCTV…LGWK and GAFV…VDCG. 3 TPR repeats span residues 252 to 285, 297 to 330, and 331 to 364; these read AKVY…LPTT, VATH…DKNN, and VKAL…EPGN.

As to quaternary structure, interacts with inaD and trpl, and may be part of the inaD signaling complex. As to expression, expression in the embryo is limited to three tissues: lymph glands, Garland cells and oenocyte cells.

It carries out the reaction [protein]-peptidylproline (omega=180) = [protein]-peptidylproline (omega=0). May have a role in phototransduction; inhibits or prevents Ca(2+) induced stimulation of the trpl ion channel. This Drosophila melanogaster (Fruit fly) protein is FK506-binding protein 59.